Consider the following 614-residue polypeptide: Vitamin B12 transporter BtuB (614 aa).

The signal sequence occupies residues 1–20; that stretch reads MIKKASLLTACSVTAFSAWA. The short motif at 26–33 is the TonB box element; it reads DTLVVTAN. The TBDR plug domain maps to 38–152; it reads PRSTVLAPTT…IGGVVNIITT (115 aa). Cyanocob(III)alamin is bound by residues Leu-83, Ser-85, Asn-92, and 110 to 111; that span reads VS. The TBDR beta-barrel domain occupies 155 to 614; the sequence is EPGTEISAGW…EYTLSGSYTF (460 aa). 3 beta stranded membrane passes run 158 to 165, 169 to 178, and 184 to 195; these read TEISAGWG, YQNYDVSTQQ, and TRVTLLGDYAHT. 4 residues coordinate Ca(2+): Asp-199, Gln-211, Asp-213, and Asp-215. The next 2 membrane-spanning stretches (beta stranded) occupy residues 217 to 227 and 232 to 248; these read FLSKTLYGALE and DAWSGFVRGYGYDNRTN. Tyr-249 and Asp-250 together coordinate Ca(2+). Residue Ala-251 participates in cyanocob(III)alamin binding. Asp-261 lines the Ca(2+) pocket. 14 beta stranded membrane-spanning segments follow: residues 263–277, 279–296, 309–325, 328–337, 353–369, 371–381, 385–400, 403–417, 434–443, 449–458, 473–490, 494–509, 517–529, and 535–550; these read RKLYSQSWDAGLRYN, ELIKSQLITSYSHSKDYN, TLDEMKQYTVQWANNII, HGNVGAGVDW, YDQRNTGIYLTGLQQVG, FTFEGAARSDD, FGRHGTWQTSAGWEFI, YRFIASYGTSYKAPN, KSKQWEGAFE, VNWRISGYRN, YYNEGKARIKGVEATANF, PLTHTVSYDYVDARNA, RRAKQQVKYQLDW, and DWGITYQYLGTRYDKD. Thr-309 lines the cyanocob(III)alamin pocket. Residue Arg-517 coordinates cyanocob(III)alamin. A cyanocob(III)alamin-binding site is contributed by Tyr-551. 3 beta stranded membrane passes run 558 to 572, 585 to 596, and 602 to 614; these read TVKMGGVSLWDLAVA, IANLFDKDYETV, and AGREYTLSGSYTF. Residues 597-614 carry the TonB C-terminal box motif; it reads YGYQTAGREYTLSGSYTF.

Belongs to the TonB-dependent receptor family. BtuB (TC 1.B.14.3.1) subfamily.

It localises to the cell outer membrane. Its function is as follows. Involved in the active translocation of vitamin B12 (cyanocobalamin) across the outer membrane to the periplasmic space. It derives its energy for transport by interacting with the trans-periplasmic membrane protein TonB. The protein is Vitamin B12 transporter BtuB of Shigella dysenteriae serotype 1 (strain Sd197).